The sequence spans 156 residues: ATP synthase subunit b (156 aa).

A helical membrane pass occupies residues 7–27; that stretch reads LFVQAIVFLILVLFTMKFVWP.

The protein belongs to the ATPase B chain family. As to quaternary structure, F-type ATPases have 2 components, F(1) - the catalytic core - and F(0) - the membrane proton channel. F(1) has five subunits: alpha(3), beta(3), gamma(1), delta(1), epsilon(1). F(0) has three main subunits: a(1), b(2) and c(10-14). The alpha and beta chains form an alternating ring which encloses part of the gamma chain. F(1) is attached to F(0) by a central stalk formed by the gamma and epsilon chains, while a peripheral stalk is formed by the delta and b chains.

It localises to the cell inner membrane. Functionally, f(1)F(0) ATP synthase produces ATP from ADP in the presence of a proton or sodium gradient. F-type ATPases consist of two structural domains, F(1) containing the extramembraneous catalytic core and F(0) containing the membrane proton channel, linked together by a central stalk and a peripheral stalk. During catalysis, ATP synthesis in the catalytic domain of F(1) is coupled via a rotary mechanism of the central stalk subunits to proton translocation. In terms of biological role, component of the F(0) channel, it forms part of the peripheral stalk, linking F(1) to F(0). This chain is ATP synthase subunit b, found in Paracidovorax citrulli (strain AAC00-1) (Acidovorax citrulli).